A 509-amino-acid polypeptide reads, in one-letter code: MAFTSPLSTWSLGQQFGLALVISALALVSVIIYGCFLHPLRHIPGPFLAKFSPLWIMRALHRMRFNSELQALHQQYGNVVRIGPNEVSFASLEAETAIYAKQEDGRFSKAGTFLTLFSDLVLNAPTLITIPDPILHRKLHKVIQQAFTPQALARQEPIQKLHIDMAMSELEELAKSGGTVDIADTLETMFWEIIGDLAFGEPLMSGKRPTYESLKQLGKSTMPMVEALSFFLTLPGIASVFGIARSLITALPFPSQLSKLVPSSKLRDCAERQDGREDFLTAIMGSEKQDLVLDADAFFSNAMGLTLAGYQTTATTLAATFYHILRYPEAYNRVCFEIRSTFVSDEEITGARLGRLPFLNACIRETLRLLPPANGKTAQRTASSCTIDGVHIPAGTTVSADLYTIQRSPKYFADPAAFRPERWLDVAEDSEFKRDNRAAYRPFLIGSRACIGREMAQQSIRLIFGNLLWKYDFQQLDQDGFVWERDAGSSLIYTDYKVMVHVMKASGRS.

2 consecutive transmembrane segments (helical) span residues 16–36 (FGLA…YGCF) and 224–244 (MVEA…FGIA). Residue cysteine 450 participates in heme binding.

This sequence belongs to the cytochrome P450 family. Heme serves as cofactor.

It is found in the membrane. The protein operates within secondary metabolite biosynthesis. Its function is as follows. Cytochrome P450 monooxygenase; part of the gene cluster that mediates the biosynthesis of the mycotoxin fusaproliferin (FUP) that belongs to the class of bicyclic sesterterpenoids. FUP2 introduces a hydroxyl group at the C-24 position resulting in the formation of preterpestacin IIa, which can be further oxidized. The oxidation of the hydroxyl group at C-24 to an aldehyde and further to a carboxylic group takes place via unspecific alcohol and aldehyde dehydrogenases and leads to the shunt products preterpestacin IIc and preterpestacin IIb, respectively. The FUP biosynthetic pathway starts with the enzyme encoded by FUP1 that combines a C-terminal prenyltransferase domain responsible for the synthesis of geranylgeranyl diphosphate with the N-terminal terpene cyclase domain, to yield preterpestacin I. Preterpestacin I is then decorated by oxygenation steps that are catalyzed by two cytochrome P450 monooxygenases. First, FUP2 introduces a hydroxyl group at the C-24 position resulting in the formation of preterpestacin IIa. The second P450 monooxygenase catalyzes the hydroxylation at C-16 and C-17 of preterpestacin IIa, producing preterpestacin III. Subsequently, the FAD-dependent oxidoreductase FUP4 catalyzes the oxidation of the hydroxy group at the C-16 position to a keto group, leading to the formation of (-)-terpestacin, which is the immediate precursor of FUP. The final step in the proposed biosynthetic pathway is the addition of an acetyl group at the C-24 position of terpestacin, which is catalyzed by the acetyltransferase FUP5. The chain is Cytochrome P450 monooxygenase FUP2 from Fusarium proliferatum (strain ET1) (Orchid endophyte fungus).